The sequence spans 114 residues: MATATTIRRKLRTRRKVRTTTAASGRLRLSVYRSSKHIYAQIIDDSRGQTLAAASSAALKSGNKTDTAAAVGKALAAAAAEKGIKQVVFDRGSYKYHGRVKALADAAREGGLDF.

This sequence belongs to the universal ribosomal protein uL18 family. Part of the 50S ribosomal subunit; part of the 5S rRNA/L5/L18/L25 subcomplex. Contacts the 23S rRNA. Contacts protein L27 and the 5S rRNA.

Its function is as follows. This is one of the proteins that bind and probably mediate the attachment of the 5S RNA into the large ribosomal subunit, where it forms part of the central protuberance. In Deinococcus radiodurans (strain ATCC 13939 / DSM 20539 / JCM 16871 / CCUG 27074 / LMG 4051 / NBRC 15346 / NCIMB 9279 / VKM B-1422 / R1), this protein is Large ribosomal subunit protein uL18 (rplR).